Reading from the N-terminus, the 485-residue chain is Probable high-affinity nitrate transporter 2.4 (485 aa).

12 consecutive transmembrane segments (helical) span residues 56 to 76 (WMSLFACFFAAFAAPPILPAM), 80 to 100 (LVLAPSDASAAAVASLSATLV), 119 to 139 (GVASLVCALALALAAVFASSP), 147 to 167 (FVAGLSLANFVANQHWMSRIF), 177 to 197 (AVAAGWANVGSAAAQVVMPVA), 215 to 235 (VTYLLPCAMLVTTGLAVLAFP), 270 to 290 (AWLLGLTYGHCYGVELIMENV), 305 to 327 (AAGAAAACFGAMNAVARPAGGVA), 341 to 361 (LWALWAVQSAGAALCVLVGRM), 377 to 397 (VACAAFVQAASGLTFGIVPFV), 405 to 425 (VSGMTASGGAVGAIVTNRLFF), and 435 to 455 (AISCTGITSLLCTLPVALIHF).

It belongs to the major facilitator superfamily. Nitrate/nitrite porter (TC 2.A.1.8) family. As to expression, expressed in the base of the lateral root primordia, root-shoot junction zone, leaves, ends of the husk and vascular tissue of the anthers.

It is found in the cell membrane. In terms of biological role, involved in nitrate transport. In Oryza sativa subsp. japonica (Rice), this protein is Probable high-affinity nitrate transporter 2.4 (NRT2.4).